Here is a 768-residue protein sequence, read N- to C-terminus: Lon protease (768 aa).

Residues 4–198 (APFLPIRDLV…RILDEIVAEM (195 aa)) enclose the Lon N-terminal domain. 349–356 (GPPGIGKT) is an ATP binding site. The region spanning 586–768 (TGKIGVVNGL…DDVSKLVFVK (183 aa)) is the Lon proteolytic domain. Active-site residues include Ser674 and Lys717.

It belongs to the peptidase S16 family. In terms of assembly, homohexamer. Organized in a ring with a central cavity.

The protein resides in the cytoplasm. The enzyme catalyses Hydrolysis of proteins in presence of ATP.. Its function is as follows. ATP-dependent serine protease that mediates the selective degradation of mutant and abnormal proteins as well as certain short-lived regulatory proteins. Required for cellular homeostasis and for survival from DNA damage and developmental changes induced by stress. Degrades polypeptides processively to yield small peptide fragments that are 5 to 10 amino acids long. Binds to DNA in a double-stranded, site-specific manner. The protein is Lon protease of Fusobacterium nucleatum subsp. nucleatum (strain ATCC 25586 / DSM 15643 / BCRC 10681 / CIP 101130 / JCM 8532 / KCTC 2640 / LMG 13131 / VPI 4355).